The primary structure comprises 309 residues: Probable manganese-dependent inorganic pyrophosphatase (309 aa).

The Mn(2+) site is built by His9, Asp13, Asp15, Asp75, His97, and Asp149.

This sequence belongs to the PPase class C family. The cofactor is Mn(2+).

The protein resides in the cytoplasm. It catalyses the reaction diphosphate + H2O = 2 phosphate + H(+). In Bacillus cereus (strain G9842), this protein is Probable manganese-dependent inorganic pyrophosphatase.